The sequence spans 79 residues: Raniseptin-9 (79 aa).

Residues 1 to 22 form the signal peptide; that stretch reads MAFLKKSLFLVLFLGIVSLSIC. Residues 23 to 49 constitute a propeptide that is removed on maturation; that stretch reads EEEKREGEEEEKQEEENEELSEEELRE. A disordered region spans residues 27–46; sequence REGEEEEKQEEENEELSEEE. The span at 30–44 shows a compositional bias: acidic residues; that stretch reads EEEEKQEEENEELSE.

The protein belongs to the frog skin active peptide (FSAP) family. Dermaseptin subfamily. Expressed by the skin glands.

It localises to the secreted. Functionally, has antibacterial activity. The polypeptide is Raniseptin-9 (Boana raniceps (Chaco tree frog)).